Here is a 38-residue protein sequence, read N- to C-terminus: Cytochrome b559 subunit beta (38 aa).

Residues 13–29 (WLAVHALAVPTVFFLGS) traverse the membrane as a helical segment. H17 lines the heme pocket.

This sequence belongs to the PsbE/PsbF family. Heterodimer of an alpha subunit and a beta subunit. PSII is composed of 1 copy each of membrane proteins PsbA, PsbB, PsbC, PsbD, PsbE, PsbF, PsbH, PsbI, PsbJ, PsbK, PsbL, PsbM, PsbT, PsbX, PsbY, PsbZ, Psb30/Ycf12, at least 3 peripheral proteins of the oxygen-evolving complex and a large number of cofactors. It forms dimeric complexes. It depends on heme b as a cofactor.

The protein resides in the plastid. The protein localises to the chloroplast thylakoid membrane. This b-type cytochrome is tightly associated with the reaction center of photosystem II (PSII). PSII is a light-driven water:plastoquinone oxidoreductase that uses light energy to abstract electrons from H(2)O, generating O(2) and a proton gradient subsequently used for ATP formation. It consists of a core antenna complex that captures photons, and an electron transfer chain that converts photonic excitation into a charge separation. The protein is Cytochrome b559 subunit beta of Ostreococcus tauri.